Reading from the N-terminus, the 463-residue chain is Glycerol-3-phosphate acyltransferase, chloroplastic (463 aa).

The N-terminal 91 residues, 1 to 91, are a transit peptide targeting the chloroplast; it reads MSIFFSPSSP…AATQPSAGSD (91 aa). Disordered stretches follow at residues 18–37 and 65–95; these read NANP…TPPL and AETV…HGHS. Composition is skewed to low complexity over residues 24–37 and 74–90; these read SPSS…TPPL and PSPS…SAGS. The HXXXXD motif motif lies at 229 to 234; that stretch reads HQTEAD.

It belongs to the GPAT/DAPAT family.

It localises to the plastid. Its subcellular location is the chloroplast stroma. It catalyses the reaction sn-glycerol 3-phosphate + an acyl-CoA = a 1-acyl-sn-glycero-3-phosphate + CoA. It participates in phospholipid metabolism; CDP-diacylglycerol biosynthesis; CDP-diacylglycerol from sn-glycerol 3-phosphate: step 1/3. Functionally, esterifies acyl-group from acyl-ACP to the sn-1 position of glycerol-3-phosphate. The enzyme from chilling-resistant plants discriminates against non-fluid palmitic acid and selects oleic acid whereas the enzyme from sensitive plants accepts both fatty acids. The protein is Glycerol-3-phosphate acyltransferase, chloroplastic of Carthamus tinctorius (Safflower).